Here is a 604-residue protein sequence, read N- to C-terminus: Lipoprotein LpqB (604 aa).

The first 27 residues, 1–27 (MTMRAARLSGSTGLTAALVAVLLVLTG), serve as a signal peptide directing secretion. Cys-28 is lipidated: N-palmitoyl cysteine. Residue Cys-28 is the site of S-diacylglycerol cysteine attachment. The tract at residues 35 to 60 (SAPQALGTIDREPTSEGPTPPIAGRD) is disordered.

It belongs to the LpqB lipoprotein family.

The protein resides in the cell membrane. The protein is Lipoprotein LpqB of Nocardia farcinica (strain IFM 10152).